The chain runs to 410 residues: Tryptophan synthase beta chain (410 aa).

Position 100 is an N6-(pyridoxal phosphate)lysine (Lys100).

This sequence belongs to the TrpB family. In terms of assembly, tetramer of two alpha and two beta chains. Requires pyridoxal 5'-phosphate as cofactor.

The enzyme catalyses (1S,2R)-1-C-(indol-3-yl)glycerol 3-phosphate + L-serine = D-glyceraldehyde 3-phosphate + L-tryptophan + H2O. It functions in the pathway amino-acid biosynthesis; L-tryptophan biosynthesis; L-tryptophan from chorismate: step 5/5. The beta subunit is responsible for the synthesis of L-tryptophan from indole and L-serine. The sequence is that of Tryptophan synthase beta chain from Pyrobaculum aerophilum (strain ATCC 51768 / DSM 7523 / JCM 9630 / CIP 104966 / NBRC 100827 / IM2).